A 314-amino-acid chain; its full sequence is MAEFNHVTVLLHEAVAGLAIQPAGVYVDATLGGGGHSGEILKQLTSGHLYSFDQDETAIHYNQANLGPAIEEGKLTLMQTNFRNLKQALADQGVTAIDGIVYDLGVSSPQFDDAKRGFSYQHDAPLDMRMNQDQPLSAYQVVNEWSYQELVRILYRYGEEKFAKQIARAIERARQKQPIQTTMELANIVKEAIPAAARRHGGHPAKKSFQAIRIAVNDELGALEDSLEQALALLKVGGRISVITFQSLEDRLVKTMFKEATSLPDLPPGLPVIPADAQPDFKLINKKPVLPTEDELKVNHRAHSAKLRVIERLK.

S-adenosyl-L-methionine-binding positions include Gly34–His36, Asp53, Phe82, Asp103, and Gln110.

This sequence belongs to the methyltransferase superfamily. RsmH family.

The protein localises to the cytoplasm. The enzyme catalyses cytidine(1402) in 16S rRNA + S-adenosyl-L-methionine = N(4)-methylcytidine(1402) in 16S rRNA + S-adenosyl-L-homocysteine + H(+). Functionally, specifically methylates the N4 position of cytidine in position 1402 (C1402) of 16S rRNA. The protein is Ribosomal RNA small subunit methyltransferase H of Limosilactobacillus fermentum (strain NBRC 3956 / LMG 18251) (Lactobacillus fermentum).